The primary structure comprises 361 residues: 3-dehydroquinate synthase (361 aa).

Residues 105–109 (GVIGD), 129–130 (TT), K142, K151, and 169–172 (FLST) contribute to the NAD(+) site. Zn(2+)-binding residues include E184, H247, and H264.

Belongs to the sugar phosphate cyclases superfamily. Dehydroquinate synthase family. Requires Co(2+) as cofactor. Zn(2+) is required as a cofactor. NAD(+) serves as cofactor.

It is found in the cytoplasm. It catalyses the reaction 7-phospho-2-dehydro-3-deoxy-D-arabino-heptonate = 3-dehydroquinate + phosphate. It participates in metabolic intermediate biosynthesis; chorismate biosynthesis; chorismate from D-erythrose 4-phosphate and phosphoenolpyruvate: step 2/7. Functionally, catalyzes the conversion of 3-deoxy-D-arabino-heptulosonate 7-phosphate (DAHP) to dehydroquinate (DHQ). The chain is 3-dehydroquinate synthase from Endomicrobium trichonymphae.